A 64-amino-acid chain; its full sequence is Large ribosomal subunit protein bL35 (64 aa).

A compositionally biased stretch (polar residues) spans 1-10; it reads MPKMKTNSAA. Residues 1 to 64 form a disordered region; that stretch reads MPKMKTNSAA…SKNMKKLLGR (64 aa).

Belongs to the bacterial ribosomal protein bL35 family.

The protein is Large ribosomal subunit protein bL35 of Bifidobacterium adolescentis (strain ATCC 15703 / DSM 20083 / NCTC 11814 / E194a).